We begin with the raw amino-acid sequence, 348 residues long: Eukaryotic translation initiation factor 3 subunit H (348 aa).

The interval 1–25 (MASRKEGSGAAGGGFGASKGKGKAA) is disordered. The span at 9–19 (GAAGGGFGASK) shows a compositional bias: gly residues. The MPN domain maps to 35–169 (VQIDGLVVLK…LKAYRLTPKL (135 aa)). The segment covering 266 to 285 (QQQQKHQYQQRRQQENLQRQ) has biased composition (low complexity). The disordered stretch occupies residues 266–304 (QQQQKHQYQQRRQQENLQRQSRGEAPLPEEDINKLFKPP).

The protein belongs to the eIF-3 subunit H family. In terms of assembly, component of the eukaryotic translation initiation factor 3 (eIF-3) complex, which is composed of 13 subunits: EIF3A, EIF3B, EIF3C, EIF3D, EIF3E, EIF3F, EIF3G, EIF3H, EIF3I, EIF3J, EIF3K, EIF3L and EIF3M.

Its subcellular location is the cytoplasm. Its function is as follows. Component of the eukaryotic translation initiation factor 3 (eIF-3) complex, which is involved in protein synthesis of a specialized repertoire of mRNAs and, together with other initiation factors, stimulates binding of mRNA and methionyl-tRNAi to the 40S ribosome. The eIF-3 complex specifically targets and initiates translation of a subset of mRNAs involved in cell proliferation. The chain is Eukaryotic translation initiation factor 3 subunit H from Gallus gallus (Chicken).